We begin with the raw amino-acid sequence, 85 residues long: Beta-insect depressant toxin Lqh-dprIT3b (85 aa).

A signal peptide spans methionine 1 to alanine 21. In terms of domain architecture, LCN-type CS-alpha/beta spans aspartate 22 to glycine 82. 4 disulfide bridges follow: cysteine 31–cysteine 81, cysteine 35–cysteine 56, cysteine 42–cysteine 63, and cysteine 46–cysteine 65. At glycine 82 the chain carries Glycine amide.

Belongs to the long (4 C-C) scorpion toxin superfamily. Sodium channel inhibitor family. Beta subfamily. As to expression, expressed by the venom gland.

It is found in the secreted. Its function is as follows. Depressant insect beta-toxins cause a transient contraction paralysis followed by a slow flaccid paralysis. They bind voltage-independently at site-4 of sodium channels (Nav) and block action potentials, primarily by depolarizing the axonal membrane and suppressing the sodium current. This depressant toxin is active only on insects. It is found in a relatively small amount in the venom, and its activity on insects is 10-fold higher compared to other known depressant toxins. This Leiurus hebraeus (Hebrew deathstalker scorpion) protein is Beta-insect depressant toxin Lqh-dprIT3b.